The chain runs to 630 residues: Transposase B from transposon Tn554 (630 aa).

In terms of domain architecture, Core-binding (CB) spans 216 to 302 (TYFKQLVKRY…ILEGLFSTLL (87 aa)). The 188-residue stretch at 326–513 (AKPRFIDEFV…FDETLKNEFT (188 aa)) folds into the Tyr recombinase domain. Active-site residues include arginine 363, lysine 391, histidine 465, arginine 468, and histidine 491. Tyrosine 500 (O-(3'-phospho-DNA)-tyrosine intermediate) is an active-site residue.

Belongs to the 'phage' integrase family.

In terms of biological role, one of three proteins encoded by transposon Tn554 required for its transposition. In Staphylococcus aureus (strain Mu50 / ATCC 700699), this protein is Transposase B from transposon Tn554 (tnpB1).